The primary structure comprises 904 residues: Protein abrupt (904 aa).

A compositionally biased stretch (polar residues) spans 1–15; that stretch reads MTESTQLQTAENNNA. Disordered regions lie at residues 1–30 and 53–72; these read MTESTQLQTAENNNAGVVKMEPPPPATSSV and GSALSPATPPPSLNLSHQQQ. One can recognise a BTB domain in the interval 103–168; that stretch reads VDVTLACDER…MYNGEVNVSH (66 aa). Over residues 204-238 the composition is skewed to low complexity; sequence SHNSSNNNNNNSSSNNSLSNNNNNNNNNAESSNHN. Disordered regions lie at residues 204–287, 349–390, 411–438, and 451–501; these read SHNS…LNSP, ASSA…PPPQ, LLDREFPVAGQHPLTRNRSGRDTSKDRE, and ALEN…NQRS. Residues 239–253 are compositionally biased toward polar residues; it reads KISSYLSPNQTSAAC. A compositionally biased stretch (low complexity) spans 254–286; it reads NNSSNSNSNNHSSSHNNSSSNNISGSLNSSLNS. Residues 429-438 are compositionally biased toward basic and acidic residues; that stretch reads SGRDTSKDRE. A compositionally biased stretch (polar residues) spans 452 to 461; it reads LENSNGQQAN. Phosphoserine is present on Ser-474. The segment covering 481-500 has biased composition (basic and acidic residues); it reads PSDRGDGQHDGTLDGIDNQR. C2H2-type zinc fingers lie at residues 544 to 567 and 573 to 596; these read RPCPKCGKIYRSAHTLRTHLEDKH and YRCVLCGTVAKSRNSLHSHMSRQH. 2 disordered regions span residues 633–696 and 832–904; these read ELRA…GGSS and AAGN…VHNT. Over residues 642–655 the composition is skewed to gly residues; sequence GGSGSSGGGGGGGS. The segment covering 671-682 has biased composition (acidic residues); the sequence is DDAEDSDDDPED. Residues Ser-837, Ser-846, and Ser-868 each carry the phosphoserine modification. The segment covering 851–868 has biased composition (basic and acidic residues); the sequence is MGHDEMAENDGDMRREGS. The span at 876 to 886 shows a compositional bias: polar residues; that stretch reads DNNQSGSNHEV. Ser-889 and Ser-896 each carry phosphoserine.

As to expression, expressed in CNS midline cells during embryonic stages 9-13. Expression also seen in cells of the stomagastric nervous system. Segmentally repeated stripes of ectodermal expression appear at stage 11 that become uniform by stage 12 and throughout embryogenesis. Expressed at variable levels in somatic muscles from stage 16 and in all imaginal disks during larval development. Expression is seen in da neurons that grow in two-dimensional dendrites underneath the epidermis during late embryonic, larval, and pupal stages.

It localises to the nucleus. Expression is vital for development; may be involved in transcriptional regulation. In embryos, muscle specific expression is required for segmental nerve b (SNb) motoneuron target recognition within ventral longitudinal muscles. Has a role in establishing and maintaining embryonic muscle attachments, adult sensory cell formation (macrochaetae) and morphogenesis of adult appendages (legs, antenna aristae and male external genitalia). Has a role in the morphogenesis of the class I dendritic neurons: selective expression of ab in class I da neurons plays a pivotal role in forming dendritic arbors, which are characteristic of the class I cells. The development of more complex arbors of class II-IV neurons depends on the absence of ab. The chain is Protein abrupt (ab) from Drosophila melanogaster (Fruit fly).